We begin with the raw amino-acid sequence, 464 residues long: Multifunctional dye peroxidase DyP2 (464 aa).

Aspartate 203 serves as the catalytic Proton acceptor. The Mn(2+) site is built by glutamate 258, glutamate 273, and glutamate 284. Heme is bound at residue histidine 321.

This sequence belongs to the DyP-type peroxidase family. As to quaternary structure, exists both as a monomeric and oligomeric species in solution; the monomeric form contains no bound heme cofactor and is inactive. Heme b is required as a cofactor. The cofactor is Mn(2+).

The protein resides in the secreted. The enzyme catalyses 1-(4-hydroxy-3-methoxyphenyl)-2-(2-methoxyphenoxy)propane-1,3-diol + H2O2 = guaiacol + vanillin + glycolaldehyde + H2O. It carries out the reaction 2 Mn(2+) + H2O2 + 2 H(+) = 2 Mn(3+) + 2 H2O. It catalyses the reaction 2 a phenolic donor + H2O2 = 2 a phenolic radical donor + 2 H2O. The catalysed reaction is Reactive Blue 5 + 2 H2O2 = 2,2'-disulfonyl azobenzene + 3-[(4-amino-6-chloro-1,3,5-triazin-2-yl)amino]benzenesulfonate + phthalate + 2 H2O + 2 H(+). In terms of biological role, displays both high peroxidase and manganese peroxidase activity. Is likely involved in lignin degradation. Also has a Mn-dependent oxidase mode of action that expands its substrate scope in vitro; is thus able to catalyze the O(2)- and Mn-dependent oxidative decarboxylation of 4-methoxymandelate to anisaldehyde. This is Multifunctional dye peroxidase DyP2 from Amycolatopsis sp. (strain ATCC 39116 / 75iv2).